A 1034-amino-acid chain; its full sequence is Isoleucine--tRNA ligase (1034 aa).

Positions 46-56 match the 'HIGH' region motif; the sequence is PYCSGAIHLGT. The 'KMSKS' region signature appears at 598-602; that stretch reads KMSKS. An ATP-binding site is contributed by K601.

The protein belongs to the class-I aminoacyl-tRNA synthetase family. IleS type 2 subfamily. Monomer. Zn(2+) is required as a cofactor.

It is found in the cytoplasm. It catalyses the reaction tRNA(Ile) + L-isoleucine + ATP = L-isoleucyl-tRNA(Ile) + AMP + diphosphate. In terms of biological role, catalyzes the attachment of isoleucine to tRNA(Ile). As IleRS can inadvertently accommodate and process structurally similar amino acids such as valine, to avoid such errors it has two additional distinct tRNA(Ile)-dependent editing activities. One activity is designated as 'pretransfer' editing and involves the hydrolysis of activated Val-AMP. The other activity is designated 'posttransfer' editing and involves deacylation of mischarged Val-tRNA(Ile). In Methanococcus maripaludis (strain DSM 14266 / JCM 13030 / NBRC 101832 / S2 / LL), this protein is Isoleucine--tRNA ligase.